Consider the following 339-residue polypeptide: Glycerol-3-phosphate dehydrogenase [NAD(P)+] (339 aa).

4 residues coordinate NADPH: serine 15, tyrosine 16, histidine 36, and lysine 110. Residues lysine 110, glycine 139, and threonine 141 each coordinate sn-glycerol 3-phosphate. Alanine 143 provides a ligand contact to NADPH. Residues lysine 195, aspartate 248, serine 258, arginine 259, and asparagine 260 each contribute to the sn-glycerol 3-phosphate site. Residue lysine 195 is the Proton acceptor of the active site. Arginine 259 serves as a coordination point for NADPH. 2 residues coordinate NADPH: valine 283 and glutamate 285.

It belongs to the NAD-dependent glycerol-3-phosphate dehydrogenase family.

The protein localises to the cytoplasm. The enzyme catalyses sn-glycerol 3-phosphate + NAD(+) = dihydroxyacetone phosphate + NADH + H(+). It catalyses the reaction sn-glycerol 3-phosphate + NADP(+) = dihydroxyacetone phosphate + NADPH + H(+). It functions in the pathway membrane lipid metabolism; glycerophospholipid metabolism. Its function is as follows. Catalyzes the reduction of the glycolytic intermediate dihydroxyacetone phosphate (DHAP) to sn-glycerol 3-phosphate (G3P), the key precursor for phospholipid synthesis. The polypeptide is Glycerol-3-phosphate dehydrogenase [NAD(P)+] (Salmonella agona (strain SL483)).